The chain runs to 758 residues: Spastin (758 aa).

Residues 1–103 (MVRTKNQSSS…SPRSGHHHSY (103 aa)) are disordered. Residues 1-121 (MVRTKNQSSS…KQNLYVVSFP (121 aa)) lie on the Cytoplasmic side of the membrane. Residues 1-210 (MVRTKNQSSS…RPIQPLEMAA (210 aa)) are required for localization to punctate cytoplasmic foci. 4 stretches are compositionally biased toward low complexity: residues 8 to 28 (SSSS…SSGA), 43 to 58 (RSSS…AGGS), 66 to 76 (SSNRRSPGSSP), and 85 to 95 (TDDLTPTTCSP). The helical intramembrane region spans 122-142 (IIFLFNVLRSLIYQLFCIFRY). Over 143-758 (LYGASTKVIY…WSQDYGDITI (616 aa)) the chain is Cytoplasmic. Composition is skewed to polar residues over residues 169–180 (SKEQQQSLNHPS) and 189–198 (QEQQLSNQPQ). The interval 169–202 (SKEQQQSLNHPSELNREGDGQEQQLSNQPQRFRP) is disordered. The sufficient for interaction with microtubules and microtubule severing stretch occupies residues 208–758 (MAANRPGGGY…WSQDYGDITI (551 aa)). Positions 233–308 (HRRAFEYISK…SMARDRLHFL (76 aa)) constitute an MIT domain. The segment at 353-454 (RVRSSGYGPK…GPSGSGASTP (102 aa)) is disordered. 2 stretches are compositionally biased toward polar residues: residues 390–406 (NKSQ…TSVG) and 425–454 (QFSS…ASTP). Positions 443-455 (NNGPSGSGASTPV) are required for interaction with microtubules. Residue 523–530 (GPPGNGKT) coordinates ATP.

Belongs to the AAA ATPase family. Spastin subfamily. Homohexamer. The homohexamer is stabilized by ATP-binding. The homohexamer may adopt a ring conformation through which microtubules pass prior to being severed. Interacts with microtubules. Interacts with atl; may be involved in microtubule dynamics.

Its subcellular location is the membrane. The protein localises to the cytoplasm. It localises to the cytoskeleton. The protein resides in the microtubule organizing center. It is found in the centrosome. Its subcellular location is the chromosome. The protein localises to the lipid droplet. It catalyses the reaction n ATP + n H2O + a microtubule = n ADP + n phosphate + (n+1) alpha/beta tubulin heterodimers.. In terms of biological role, ATP-dependent microtubule severing protein. Stimulates microtubule minus-end depolymerization and poleward microtubule flux in the mitotic spindle. Regulates microtubule stability in the neuromuscular junction synapse. Involved in lipid metabolism by regulating the size and distribution of lipid droplets. Involved in axon regeneration by regulating microtubule severing. The sequence is that of Spastin from Drosophila sechellia (Fruit fly).